A 219-amino-acid polypeptide reads, in one-letter code: Type-5 uracil-DNA glycosylase (219 aa).

Positions 13, 16, 115, and 130 each coordinate [4Fe-4S] cluster.

This sequence belongs to the uracil-DNA glycosylase (UDG) superfamily. Type 5 (UDGb) family.

Its function is as follows. DNA glycosylase with broad substrate specificity. Can remove uracil from double-stranded DNA containing either a U/G, U/A, U/C or U/T base pair. Can also excise hypoxanthine from double-stranded DNA containing G/I, T/I, and A/I base pairs, xanthine from both double-stranded and single stranded DNA, thymine from G/T mismatched DNA, 5'-hydroxymethyluracil and 5'-fluorouracil. This Thermus thermophilus (strain ATCC 27634 / DSM 579 / HB8) protein is Type-5 uracil-DNA glycosylase.